A 530-amino-acid chain; its full sequence is Calnexin homolog 1 (530 aa).

A signal peptide spans 1 to 20; sequence MRQRQLFSVFLLLLAFVSFQ. Residues 21–466 are Lumenal-facing; sequence KLCYCDDQTV…EKAEQQPNLT (446 aa). The Ca(2+) site is built by Ser-34 and Asp-65. Cys-108 and Cys-143 are oxidised to a cystine. Positions 112, 114, 134, and 141 each coordinate an alpha-D-glucoside. Positions 216 to 315 are disordered; sequence ALIPAKTIPD…KCEAAPGCGE (100 aa). Residues 223-356 form a p domain (Extended arm) region; the sequence is IPDPEDKKPE…RDIPNPDYFE (134 aa). Over residues 224–240 the composition is skewed to basic and acidic residues; it reads PDPEDKKPEDWDERAKI. Repeat copies occupy residues 225–236, 242–253, 261–272, 280–291, and 295–305. 4 X approximate repeats stretches follow at residues 225–291 and 295–352; these read DPED…DWDD and GMWE…IPNP. Acidic residues predominate over residues 250 to 281; that stretch reads DWDEDAPMEIEDEEAEKPEGWLDDEPEEVDDP. Cys-307 and Cys-313 are disulfide-bonded. 3 consecutive repeat copies span residues 314–324, 328–338, and 342–352. Glu-371 contacts an alpha-D-glucoside. Asp-382 contacts Ca(2+). Residue Asn-464 is glycosylated (N-linked (GlcNAc...) asparagine). A helical transmembrane segment spans residues 467–487; sequence IGVLVAIVVVFFSLFLKLIFG. Topologically, residues 488–530 are cytoplasmic; sequence GKKAAAPVEKKKPEVAESSKSGDEAEKKEETAAPRKRQPRRDN. Positions 490–530 are disordered; the sequence is KAAAPVEKKKPEVAESSKSGDEAEKKEETAAPRKRQPRRDN. Residues 495 to 520 are compositionally biased toward basic and acidic residues; that stretch reads VEKKKPEVAESSKSGDEAEKKEETAA. At Ser-508 the chain carries Phosphoserine. The span at 521–530 shows a compositional bias: basic residues; that stretch reads PRKRQPRRDN.

This sequence belongs to the calreticulin family.

The protein resides in the endoplasmic reticulum membrane. Its function is as follows. Calcium-binding protein that interacts with newly synthesized monoglucosylated glycoproteins in the endoplasmic reticulum. It may act in assisting protein assembly and/or in the retention within the ER of unassembled protein subunits. It seems to play a major role in the quality control apparatus of the ER by the retention of incorrectly folded proteins. The protein is Calnexin homolog 1 (CNX1) of Arabidopsis thaliana (Mouse-ear cress).